A 333-amino-acid polypeptide reads, in one-letter code: DNA-directed RNA polymerase subunit alpha (333 aa).

Positions 1–234 (MQSSVNEFLT…QQLAAFVDLK (234 aa)) are alpha N-terminal domain (alpha-NTD). Residues 248-333 (IDPILLRPVD…SLKKDDKATA (86 aa)) are alpha C-terminal domain (alpha-CTD).

This sequence belongs to the RNA polymerase alpha chain family. Homodimer. The RNAP catalytic core consists of 2 alpha, 1 beta, 1 beta' and 1 omega subunit. When a sigma factor is associated with the core the holoenzyme is formed, which can initiate transcription.

It carries out the reaction RNA(n) + a ribonucleoside 5'-triphosphate = RNA(n+1) + diphosphate. Functionally, DNA-dependent RNA polymerase catalyzes the transcription of DNA into RNA using the four ribonucleoside triphosphates as substrates. The sequence is that of DNA-directed RNA polymerase subunit alpha from Pseudomonas putida (Arthrobacter siderocapsulatus).